A 1149-amino-acid polypeptide reads, in one-letter code: Bone sialoprotein-binding protein (1149 aa).

The N-terminal stretch at 1–52 is a signal peptide; that stretch reads MINRDNKKAITKKGMISNRLNKFSIRKYTVGTASILVGTTLIFGLGNQEAKA. The ligand binding A region stretch occupies residues 53 to 601; sequence AENTSTENAK…GDGTVKPEEK (549 aa). Disordered stretches follow at residues 54 to 249 and 675 to 697; these read ENTS…TAPT and LPTK…VTVK. Positions 61–75 are enriched in basic and acidic residues; that stretch reads AKQDEASASDNKEVV. Residues 77 to 89 show a composition bias toward polar residues; sequence ETENNSTQKNDLT. Basic and acidic residues predominate over residues 92-106; the sequence is IKKETNTDSHQEAKE. The span at 109 to 126 shows a compositional bias: low complexity; that stretch reads TTSSTQQQQNNATTSTET. A compositionally biased stretch (basic and acidic residues) spans 130–145; that stretch reads NIEKENVKPSTDKTAT. Positions 158–205 are enriched in polar residues; sequence PNNTNNDVTTKPSTSEIQTTPTTPQESTNIENSQPQPTPSKVDNQVTD. Basic and acidic residues predominate over residues 216-241; the sequence is SKEELKNNPEKLKELVRNDSNTDRST. 3 consecutive CNA-B domains span residues 602 to 714, 715 to 824, and 825 to 935; these read LYKI…YKEP, KYNL…YKTP, and KYSL…EEDT. Residues 896–1124 form a disordered region; sequence TQTGTNTTED…TGSENNGSNN (229 aa). Acidic residues-rich tracts occupy residues 903-913 and 930-1088; these read TEDDKDADGGE and YFEE…DSDS. The LPXTG sorting signal signature appears at 1112 to 1116; it reads LPETG. Position 1115 is a pentaglycyl murein peptidoglycan amidated threonine (T1115). Positions 1116 to 1149 are cleaved as a propeptide — removed by sortase; sequence GSENNGSNNATLFGGLFAALGSLLLFGRRKKQNK.

The protein belongs to the serine-aspartate repeat-containing protein (SDr) family.

It is found in the secreted. The protein resides in the cell wall. In terms of biological role, specifically interacts with bone sialoprotein (BSP), a glycoprotein of bone and dentin extracellular matrix. Could contribute to staphylococcal osteomyelitis and arthritis. The protein is Bone sialoprotein-binding protein (bbp) of Staphylococcus aureus.